We begin with the raw amino-acid sequence, 228 residues long: LexA repressor (228 aa).

Positions 26–46 (FDEMKDALDLRSKSGIHRLIT) form a DNA-binding region, H-T-H motif. Active-site for autocatalytic cleavage activity residues include Ser149 and Lys187.

Belongs to the peptidase S24 family. In terms of assembly, homodimer.

It carries out the reaction Hydrolysis of Ala-|-Gly bond in repressor LexA.. Functionally, represses a number of genes involved in the response to DNA damage (SOS response), including recA and lexA. Has been shown to bind to the direct repeat sequence 5'-GTT-N(7)-GTTC-3'. In the presence of single-stranded DNA, RecA interacts with LexA causing an autocatalytic cleavage which disrupts the DNA-binding part of LexA, leading to derepression of the SOS regulon and eventually DNA repair. The chain is LexA repressor from Cereibacter sphaeroides (strain ATCC 17023 / DSM 158 / JCM 6121 / CCUG 31486 / LMG 2827 / NBRC 12203 / NCIMB 8253 / ATH 2.4.1.) (Rhodobacter sphaeroides).